Reading from the N-terminus, the 250-residue chain is Flavin-dependent thymidylate synthase (250 aa).

Residues L7–E233 form the ThyX domain. Residues E92–R95, Q103–R107, and R172 each bind dUMP. Residues R95 to R97 and Q103 contribute to the FAD site. The ThyX motif signature appears at R95–S105. Residues N188 to R190 and H194 each bind FAD. R199 provides a ligand contact to dUMP. R199 functions as the Involved in ionization of N3 of dUMP, leading to its activation in the catalytic mechanism.

It belongs to the thymidylate synthase ThyX family. In terms of assembly, homotetramer. FAD is required as a cofactor.

The enzyme catalyses dUMP + (6R)-5,10-methylene-5,6,7,8-tetrahydrofolate + NADPH + H(+) = dTMP + (6S)-5,6,7,8-tetrahydrofolate + NADP(+). It functions in the pathway pyrimidine metabolism; dTTP biosynthesis. Its function is as follows. Catalyzes the reductive methylation of 2'-deoxyuridine-5'-monophosphate (dUMP) to 2'-deoxythymidine-5'-monophosphate (dTMP) while utilizing 5,10-methylenetetrahydrofolate (mTHF) as the methyl donor, and NADPH and FADH(2) as the reductant. The protein is Flavin-dependent thymidylate synthase of Corynebacterium glutamicum (strain ATCC 13032 / DSM 20300 / JCM 1318 / BCRC 11384 / CCUG 27702 / LMG 3730 / NBRC 12168 / NCIMB 10025 / NRRL B-2784 / 534).